A 329-amino-acid chain; its full sequence is Biotin synthase (329 aa).

Residues 48–278 (FLGTGVDLCS…DRKIAVCGGR (231 aa)) enclose the Radical SAM core domain. Positions 66, 70, and 73 each coordinate [4Fe-4S] cluster. [2Fe-2S] cluster contacts are provided by S143 and C203.

Belongs to the radical SAM superfamily. Biotin synthase family. As to quaternary structure, homodimer. The cofactor is [4Fe-4S] cluster. Requires [2Fe-2S] cluster as cofactor.

The catalysed reaction is (4R,5S)-dethiobiotin + (sulfur carrier)-SH + 2 reduced [2Fe-2S]-[ferredoxin] + 2 S-adenosyl-L-methionine = (sulfur carrier)-H + biotin + 2 5'-deoxyadenosine + 2 L-methionine + 2 oxidized [2Fe-2S]-[ferredoxin]. Its pathway is cofactor biosynthesis; biotin biosynthesis; biotin from 7,8-diaminononanoate: step 2/2. Catalyzes the conversion of dethiobiotin (DTB) to biotin by the insertion of a sulfur atom into dethiobiotin via a radical-based mechanism. This chain is Biotin synthase, found in Geobacter sulfurreducens (strain ATCC 51573 / DSM 12127 / PCA).